Here is a 758-residue protein sequence, read N- to C-terminus: MAAPTPSNRIEERSGHASCVRADADLPPVAILGRSPITLRHKIFFVAVAVIGALAWTVVAFFRNEPVNAVWIVVAAGCTYIIGFRFYARLIEMKVVRPRDDHATPAEILDDGTDYVPTDRRVVFGHHFAAIAGAGPLVGPVLATQMGYLPSSIWIVVGAVLAGCVQDYLVLWISVRRRGRSLGQMVRDELGATAGVAALVGIPVIITIVIAVLALVVVRALAKSPWGVFSIAMTIPIAIFMGCYLRFLRPGRVSEVSLIGIGLLLLAVVSGDWVAHTSWGAAWFSLSPVTLCWLLISYGFAASVLPVWLLLAPRDYLSTFMKVGTIALLAIGVCAAHPIIEAPAVSKFAGSGNGPVFAGSLFPFLFITIACGALSGFDALICSGTTPKMLEKEGQMRVIGYGGMMTESFVAVIALLTAAILDQHLYFTLNAPSLHTHDSAATAAKYVNGLGLTGSPVTPDHISQAAASVGEQTIVSRTGGAPTLAFGMAEMLHRVVGGVGLKAFWYHFAIMFEALFILTTVDAGTRAARFMISDALGNFGGVLRKLQNPSWRPGAWACSLVVVAAWGSILLLGVTDPLGGINTLFPLFGIANQLLAGIALTVITVVVIKKGRLKWAWIPGIPLLWDLAVTLTASWQKIFSADPSVGYWTQHAHYAAAQHAGETAFGSATNADEINDVVRNTFVQGTLSIVFVVVVVLVVVAGVIVALKTIRGRGIPLAEDDPAPSTLFAPAGLIPTAAERKLQRRLGAPASASVAAPD.

Transmembrane regions (helical) follow at residues 42-62 (KIFF…VAFF), 67-87 (VNAV…FRFY), 122-142 (VVFG…GPVL), 153-173 (IWIV…VLWI), 198-218 (ALVG…LVVV), 225-245 (PWGV…GCYL), 256-276 (VSLI…WVAH), 291-311 (LCWL…WLLL), 320-340 (FMKV…HPII), 361-381 (LFPF…DALI), 401-421 (YGGM…AAIL), 498-518 (GVGL…LFIL), 561-581 (VVVA…LGGI), 588-608 (FGIA…VVVI), 615-635 (WAWI…TASW), and 687-707 (LSIV…IVAL).

The protein belongs to the peptide transporter carbon starvation (CstA) (TC 2.A.114) family.

Its subcellular location is the cell membrane. Involved in peptide utilization. The sequence is that of Peptide transporter CstA (cstA) from Mycobacterium tuberculosis (strain CDC 1551 / Oshkosh).